The primary structure comprises 82 residues: Small ribosomal subunit protein bS16 (82 aa).

It belongs to the bacterial ribosomal protein bS16 family.

In Yersinia enterocolitica serotype O:8 / biotype 1B (strain NCTC 13174 / 8081), this protein is Small ribosomal subunit protein bS16.